A 68-amino-acid polypeptide reads, in one-letter code: Sec-independent protein translocase protein TatA (68 aa).

A helical transmembrane segment spans residues 1–21; sequence MGSLSIWHWLIVLLIVVLVFG. The tract at residues 42 to 68 is disordered; that stretch reads GMNEGAKDGQPPAKDAGRIIDGEADKK. The segment covering 56–68 has biased composition (basic and acidic residues); sequence DAGRIIDGEADKK.

The protein belongs to the TatA/E family. In terms of assembly, the Tat system comprises two distinct complexes: a TatABC complex, containing multiple copies of TatA, TatB and TatC subunits, and a separate TatA complex, containing only TatA subunits. Substrates initially bind to the TatABC complex, which probably triggers association of the separate TatA complex to form the active translocon.

Its subcellular location is the cell inner membrane. Part of the twin-arginine translocation (Tat) system that transports large folded proteins containing a characteristic twin-arginine motif in their signal peptide across membranes. TatA could form the protein-conducting channel of the Tat system. The protein is Sec-independent protein translocase protein TatA of Chromobacterium violaceum (strain ATCC 12472 / DSM 30191 / JCM 1249 / CCUG 213 / NBRC 12614 / NCIMB 9131 / NCTC 9757 / MK).